The chain runs to 68 residues: MPQLNTTVWPTMIAPMLLTLFLITQLKVLNTNYHLPPLPKTMKMKNFCKPWEPKWTKIYSLHSLPPQS.

The helical transmembrane segment at 8–24 threads the bilayer; the sequence is VWPTMIAPMLLTLFLIT. The residue at position 54 (Lys-54) is an N6-acetyllysine; alternate. Lys-54 carries the post-translational modification N6-succinyllysine; alternate. Lys-57 is modified (N6-acetyllysine).

It belongs to the ATPase protein 8 family. Component of the ATP synthase complex composed at least of ATP5F1A/subunit alpha, ATP5F1B/subunit beta, ATP5MC1/subunit c (homooctomer), MT-ATP6/subunit a, MT-ATP8/subunit 8, ATP5ME/subunit e, ATP5MF/subunit f, ATP5MG/subunit g, ATP5MK/subunit k, ATP5MJ/subunit j, ATP5F1C/subunit gamma, ATP5F1D/subunit delta, ATP5F1E/subunit epsilon, ATP5PF/subunit F6, ATP5PB/subunit b, ATP5PD/subunit d, ATP5PO/subunit OSCP. ATP synthase complex consists of a soluble F(1) head domain (subunits alpha(3) and beta(3)) - the catalytic core - and a membrane F(0) domain - the membrane proton channel (subunits c, a, 8, e, f, g, k and j). These two domains are linked by a central stalk (subunits gamma, delta, and epsilon) rotating inside the F1 region and a stationary peripheral stalk (subunits F6, b, d, and OSCP). Interacts with PRICKLE3.

It localises to the mitochondrion membrane. Subunit 8, of the mitochondrial membrane ATP synthase complex (F(1)F(0) ATP synthase or Complex V) that produces ATP from ADP in the presence of a proton gradient across the membrane which is generated by electron transport complexes of the respiratory chain. ATP synthase complex consist of a soluble F(1) head domain - the catalytic core - and a membrane F(1) domain - the membrane proton channel. These two domains are linked by a central stalk rotating inside the F(1) region and a stationary peripheral stalk. During catalysis, ATP synthesis in the catalytic domain of F(1) is coupled via a rotary mechanism of the central stalk subunits to proton translocation. In vivo, can only synthesize ATP although its ATP hydrolase activity can be activated artificially in vitro. Part of the complex F(0) domain. The chain is ATP synthase F(0) complex subunit 8 from Gorilla gorilla gorilla (Western lowland gorilla).